Consider the following 451-residue polypeptide: Cobalamin reductase PduS (451 aa).

2 consecutive 4Fe-4S ferredoxin-type domains span residues 255–284 (TVLSVAKTVCEQCRLCTDLCPRHLIGHELS) and 300–330 (PQLLLTALTCSECNVCESVACPVGISPMRIN). Positions 264, 267, 270, 274, 309, 312, 315, and 320 each coordinate [4Fe-4S] cluster.

This sequence belongs to the PduS cobalamin reductase family. In terms of assembly, monomer, forms a complex with PduO. Interacts with PduT, probably via the N-terminus of PduS. It depends on [4Fe-4S] cluster as a cofactor. The cofactor is FMN.

The protein resides in the bacterial microcompartment. The protein operates within polyol metabolism; 1,2-propanediol degradation. Its function is as follows. A bifunctional cobalamin reductase that converts cob(III)alamin to cob(II)alamin and then to cob(I)alamin in the bacterial microcompartment (BMC) dedicated to 1,2-propanediol (1,2-PD) degradation. PduS and PduO allow regeneration of the adenosylcobalamin cofactor within the BMC. Cobalamin reduction probably occurs spontaneously in the presence of free reduced flavin nucleotides, this protein may be involved in electron transfer for this reduction. Functionally, expression of a cosmid containing the full 21-gene pdu operon in E.coli allows E.coli to grow on 1,2-propanediol (1,2-PD) with the appearance of BMCs in its cytoplasm. In terms of biological role, the 1,2-PD-specific bacterial microcompartment (BMC) concentrates low levels of 1,2-PD catabolic enzymes, concentrates volatile reaction intermediates thus enhancing pathway flux and keeps the level of toxic, mutagenic propionaldehyde low. The chain is Cobalamin reductase PduS from Citrobacter freundii.